Consider the following 65-residue polypeptide: KKEGYLVGNDGCKYSCFTRPAQYCVHECELRKGTDGYCYAWLACYCYNMPDHVRTWSRATNRCGS.

The region spanning 2–64 is the LCN-type CS-alpha/beta domain; sequence KEGYLVGNDG…TWSRATNRCG (63 aa). 4 disulfides stabilise this stretch: C12-C63, C16-C38, C24-C44, and C28-C46.

In terms of tissue distribution, expressed by the venom gland.

The protein resides in the secreted. Its function is as follows. Beta toxins bind voltage-independently at site-4 of sodium channels (Nav) and shift the voltage of activation toward more negative potentials thereby affecting sodium channel activation and promoting spontaneous and repetitive firing. This toxin is lethal to mice. The polypeptide is Beta-mammal toxin Tpa2 (Tityus pachyurus (Colombian scorpion)).